Consider the following 907-residue polypeptide: Putative ATP-dependent DNA helicase DDX11-like protein 8 (907 aa).

The Helicase ATP-binding domain maps to 9–447 (GAIHFPFPFT…KNLMYLKQIL (439 aa)). 44-51 (SPTGTGKS) contacts ATP. The interval 202-222 (YESDEEKKVASGHRVDEDEDD) is disordered. The span at 206–217 (EEKKVASGHRVD) shows a compositional bias: basic and acidic residues. Phosphoserine is present on S264. [4Fe-4S] cluster is bound by residues C269 and C287. Over residues 291–306 (QRSRHEKKKGAEEEKP) the composition is skewed to basic and acidic residues. The tract at residues 291 to 314 (QRSRHEKKKGAEEEKPKRRRQEKQ) is disordered. Positions 317 and 352 each coordinate [4Fe-4S] cluster. Residues 395-398 (DEAH) carry the DEAH motif.

The protein belongs to the DEAD box helicase family. DEAH subfamily. DDX11/CHL1 sub-subfamily. It depends on [4Fe-4S] cluster as a cofactor.

The protein resides in the nucleus. The protein localises to the nucleolus. Its function is as follows. Putative DNA helicase. This is Putative ATP-dependent DNA helicase DDX11-like protein 8 (DDX11L8) from Homo sapiens (Human).